The chain runs to 476 residues: Cysteine--tRNA ligase (476 aa).

Cys31 lines the Zn(2+) pocket. A 'HIGH' region motif is present at residues 33–43 (PTVYNYAHIGN). Residues Cys211, His236, and Glu240 each contribute to the Zn(2+) site. Residues 269 to 273 (KMSKS) carry the 'KMSKS' region motif. Lys272 is an ATP binding site.

The protein belongs to the class-I aminoacyl-tRNA synthetase family. Monomer. Zn(2+) is required as a cofactor.

It is found in the cytoplasm. The enzyme catalyses tRNA(Cys) + L-cysteine + ATP = L-cysteinyl-tRNA(Cys) + AMP + diphosphate. The chain is Cysteine--tRNA ligase from Xanthomonas euvesicatoria pv. vesicatoria (strain 85-10) (Xanthomonas campestris pv. vesicatoria).